The following is a 172-amino-acid chain: 3-phenylpropionate/cinnamic acid dioxygenase subunit beta (172 aa).

The protein belongs to the bacterial ring-hydroxylating dioxygenase beta subunit family. In terms of assembly, this dioxygenase system consists of four proteins: the two subunits of the hydroxylase component (HcaE and HcaF), a ferredoxin (HcaC) and a ferredoxin reductase (HcaD).

It catalyses the reaction 3-phenylpropanoate + NADH + O2 + H(+) = 3-(cis-5,6-dihydroxycyclohexa-1,3-dien-1-yl)propanoate + NAD(+). The enzyme catalyses (E)-cinnamate + NADH + O2 + H(+) = (2E)-3-(cis-5,6-dihydroxycyclohexa-1,3-dien-1-yl)prop-2-enoate + NAD(+). It functions in the pathway aromatic compound metabolism; 3-phenylpropanoate degradation. In terms of biological role, part of the multicomponent 3-phenylpropionate dioxygenase. Converts 3-phenylpropionic acid (PP) and cinnamic acid (CI) into 3-phenylpropionate-dihydrodiol (PP-dihydrodiol) and cinnamic acid-dihydrodiol (CI-dihydrodiol), respectively. This is 3-phenylpropionate/cinnamic acid dioxygenase subunit beta from Shigella sonnei (strain Ss046).